Reading from the N-terminus, the 469-residue chain is uncharacterized protein (469 aa).

The signal sequence occupies residues 1–19; that stretch reads MRINFVLLITLILPWFVSG. Helical transmembrane passes span 199–219, 236–256, 283–303, 305–325, 338–358, 386–406, and 413–433; these read IKST…TWLL, AFWV…MVAI, AYTS…PALV, YYVY…FAPL, ILLK…PFFA, IALA…RPLL, and GFQL…AFLF.

The protein localises to the membrane. This is an uncharacterized protein from Schizosaccharomyces pombe (strain 972 / ATCC 24843) (Fission yeast).